The sequence spans 336 residues: tRNA N6-adenosine threonylcarbamoyltransferase (336 aa).

Residues H114 and H118 each contribute to the Fe cation site. Substrate contacts are provided by residues 136-140 (LVSGG), D169, G182, D186, and N275. D302 is a binding site for Fe cation.

The protein belongs to the KAE1 / TsaD family. Requires Fe(2+) as cofactor.

Its subcellular location is the cytoplasm. It catalyses the reaction L-threonylcarbamoyladenylate + adenosine(37) in tRNA = N(6)-L-threonylcarbamoyladenosine(37) in tRNA + AMP + H(+). Required for the formation of a threonylcarbamoyl group on adenosine at position 37 (t(6)A37) in tRNAs that read codons beginning with adenine. Is involved in the transfer of the threonylcarbamoyl moiety of threonylcarbamoyl-AMP (TC-AMP) to the N6 group of A37, together with TsaE and TsaB. TsaD likely plays a direct catalytic role in this reaction. In Streptococcus agalactiae serotype V (strain ATCC BAA-611 / 2603 V/R), this protein is tRNA N6-adenosine threonylcarbamoyltransferase.